Consider the following 287-residue polypeptide: uncharacterized protein (287 aa).

Residues Gly-43 to Ser-50, Asp-90 to Gly-93, and Asp-156 to Glu-159 contribute to the GTP site. Residues Gly-48–Gln-138 enclose the G domain.

This sequence to E.coli YfjP and YeeP.

This is an uncharacterized protein from Escherichia coli (strain K12).